Here is a 127-residue protein sequence, read N- to C-terminus: Fluoride-specific ion channel FluC 1 (127 aa).

The next 3 helical transmembrane spans lie at 6–26 (PLVT…GSNL), 29–49 (FVGL…CGSF), and 95–115 (EWAV…VLVG).

Belongs to the fluoride channel Fluc/FEX (TC 1.A.43) family.

The protein localises to the cell membrane. It catalyses the reaction fluoride(in) = fluoride(out). Its function is as follows. Fluoride-specific ion channel. Important for reducing fluoride concentration in the cell, thus reducing its toxicity. This chain is Fluoride-specific ion channel FluC 1, found in Haloarcula marismortui (strain ATCC 43049 / DSM 3752 / JCM 8966 / VKM B-1809) (Halobacterium marismortui).